Reading from the N-terminus, the 728-residue chain is Glutamate--cysteine ligase (728 aa).

Positions 517-552 (PVRTTRRGGSASRSASGTSTPNSGSSRPATPPLGPV) are disordered. Over residues 523-536 (RGGSASRSASGTST) the composition is skewed to low complexity.

It belongs to the glutamate--cysteine ligase type 3 family.

The enzyme catalyses L-cysteine + L-glutamate + ATP = gamma-L-glutamyl-L-cysteine + ADP + phosphate + H(+). Its pathway is sulfur metabolism; glutathione biosynthesis; glutathione from L-cysteine and L-glutamate: step 1/2. The polypeptide is Glutamate--cysteine ligase (gcs-1) (Neurospora crassa (strain ATCC 24698 / 74-OR23-1A / CBS 708.71 / DSM 1257 / FGSC 987)).